The following is a 361-amino-acid chain: Serine/threonine-protein kinase SAPK9 (361 aa).

Residues tyrosine 22–phenylalanine 278 enclose the Protein kinase domain. ATP is bound by residues isoleucine 28–alanine 36 and lysine 51. Aspartate 141 (proton acceptor) is an active-site residue.

Belongs to the protein kinase superfamily. Ser/Thr protein kinase family. In terms of assembly, interacts with BZIP46. In terms of processing, may be phosphorylated. In terms of tissue distribution, expressed in leaf sheaths and roots. Expressed in shoots of young seedlings.

The protein resides in the cytoplasm. The protein localises to the nucleus. The catalysed reaction is L-seryl-[protein] + ATP = O-phospho-L-seryl-[protein] + ADP + H(+). It carries out the reaction L-threonyl-[protein] + ATP = O-phospho-L-threonyl-[protein] + ADP + H(+). Its activity is regulated as follows. Activated by hyperosmotic stress and abscisic acid (ABA). Functionally, may play a role in signal transduction of hyperosmotic response. Can phosphorylate BZIP46 in vitro. The protein is Serine/threonine-protein kinase SAPK9 (SAPK9) of Oryza sativa subsp. japonica (Rice).